The primary structure comprises 232 residues: MAQTKREKAIKAAVVPGKAYAFEDAINILKTATKAKFVESIDVSVRLGVDAKKSDQQVRGSTVLPAGTGKSVRVAVFAPAGAKADEALAAGAEAVGMDDLAEKMQAGDLNYDVVIATPDAMRVVGKLGTVLGPRGLMPNPKVGTVSPNPGEAVKNAKSGQVRYRTDKAGIIHCTIGKADFAEDALKSNLTALLLDLIKAKPATSKGTYLQKVSVSSTMGPGVTVDQSSLTLK.

The protein belongs to the universal ribosomal protein uL1 family. As to quaternary structure, part of the 50S ribosomal subunit.

Functionally, binds directly to 23S rRNA. The L1 stalk is quite mobile in the ribosome, and is involved in E site tRNA release. Protein L1 is also a translational repressor protein, it controls the translation of the L11 operon by binding to its mRNA. This Stenotrophomonas maltophilia (strain R551-3) protein is Large ribosomal subunit protein uL1.